The primary structure comprises 186 residues: Inner membrane-spanning protein YciB (186 aa).

Transmembrane regions (helical) follow at residues 10–30, 47–67, 76–96, 121–141, and 149–169; these read IILF…AVAI, VEPL…ATLL, WKPT…QLMF, WGWT…AYHF, and FKLF…ALYL.

It belongs to the YciB family.

It is found in the cell inner membrane. Functionally, plays a role in cell envelope biogenesis, maintenance of cell envelope integrity and membrane homeostasis. The polypeptide is Inner membrane-spanning protein YciB (Acidovorax ebreus (strain TPSY) (Diaphorobacter sp. (strain TPSY))).